The chain runs to 864 residues: Mitochondrial 15S rRNA processing factor CCM1 (864 aa).

Residues 1–76 (MYMARCGPKN…REFSNTLKER (76 aa)) constitute a mitochondrion transit peptide. 2 PPR repeats span residues 319–353 (NKQNLTTVIQFYSRKEMTKQAWNTFDTMKFLSTKH) and 356–390 (DICTYNTMLRICEKERNFPKALDLFQEIQDHNIKP).

Belongs to the CCM1 family. As to quaternary structure, binds to mitochondrial small subunit 15S rRNA.

The protein localises to the mitochondrion. Regulates mitochondrial small subunit maturation by controlling 15S rRNA 5'-end processing. Localizes to the 5' precursor of the 15S rRNA in a position that is subsequently occupied by mS47 in the mature yeast mtSSU. Uses structure and sequence-specific RNA recognition, binding to a single-stranded region of the precursor and specifically recognizing bases -6 to -1. The exchange of Ccm1 for mS47 is coupled to the irreversible removal of precursor rRNA that is accompanied by conformational changes of the mitoribosomal proteins uS5m and mS26. These conformational changes signal completion of 5'-end rRNA processing through protection of the mature 5'-end of the 15S rRNA and stabilization of mS47. The removal of the 5' precursor together with the dissociation of Ccm1 may be catalyzed by the 5'-3' exoribonuclease Pet127. Involved in the specific removal of group I introns in mitochondrial encoded transcripts. The sequence is that of Mitochondrial 15S rRNA processing factor CCM1 (CCM1) from Saccharomyces cerevisiae (strain RM11-1a) (Baker's yeast).